Here is a 384-residue protein sequence, read N- to C-terminus: S-adenosylmethionine synthase (384 aa).

His-15 contributes to the ATP binding site. Asp-17 is a Mg(2+) binding site. A K(+)-binding site is contributed by Glu-43. Residues Glu-56 and Gln-99 each coordinate L-methionine. The segment at 99–109 is flexible loop; it reads QSPDINQGVDK. ATP-binding positions include 164–166, 230–231, Asp-239, 245–246, Ala-262, and Lys-266; these read DAK, RF, and RK. L-methionine is bound at residue Asp-239. Lys-270 contributes to the L-methionine binding site.

It belongs to the AdoMet synthase family. As to quaternary structure, homotetramer; dimer of dimers. Mg(2+) serves as cofactor. Requires K(+) as cofactor.

It is found in the cytoplasm. The catalysed reaction is L-methionine + ATP + H2O = S-adenosyl-L-methionine + phosphate + diphosphate. It functions in the pathway amino-acid biosynthesis; S-adenosyl-L-methionine biosynthesis; S-adenosyl-L-methionine from L-methionine: step 1/1. Its function is as follows. Catalyzes the formation of S-adenosylmethionine (AdoMet) from methionine and ATP. The overall synthetic reaction is composed of two sequential steps, AdoMet formation and the subsequent tripolyphosphate hydrolysis which occurs prior to release of AdoMet from the enzyme. The protein is S-adenosylmethionine synthase of Vibrio vulnificus (strain YJ016).